Here is an 838-residue protein sequence, read N- to C-terminus: 1,4-alpha-glucan branching enzyme GlgB 1 (838 aa).

Basic and acidic residues predominate over residues 1-11; sequence MIPRPPSDDRA. Disordered regions lie at residues 1–98 and 116–142; these read MIPR…VSKK and PVSP…SVLG. The span at 29–57 shows a compositional bias: low complexity; the sequence is KKAAAAKKTAGKKATPAAKATAAKGAVTK. Aspartate 513 acts as the Nucleophile in catalysis. The active-site Proton donor is the glutamate 566. The segment at 793-822 is disordered; it reads TDGARYGGSDVTNPHPVKPEPQGRHGRPAS.

The protein belongs to the glycosyl hydrolase 13 family. GlgB subfamily. In terms of assembly, monomer.

It catalyses the reaction Transfers a segment of a (1-&gt;4)-alpha-D-glucan chain to a primary hydroxy group in a similar glucan chain.. The protein operates within glycan biosynthesis; glycogen biosynthesis. Catalyzes the formation of the alpha-1,6-glucosidic linkages in glycogen by scission of a 1,4-alpha-linked oligosaccharide from growing alpha-1,4-glucan chains and the subsequent attachment of the oligosaccharide to the alpha-1,6 position. The sequence is that of 1,4-alpha-glucan branching enzyme GlgB 1 from Streptomyces avermitilis (strain ATCC 31267 / DSM 46492 / JCM 5070 / NBRC 14893 / NCIMB 12804 / NRRL 8165 / MA-4680).